The chain runs to 428 residues: NADH-ubiquinone oxidoreductase chain 2 (428 aa).

14 helical membrane-spanning segments follow: residues 22–42 (IAFL…LHFG), 59–79 (LDES…VIMN), 84–104 (LGWE…YMLT), 108–128 (LLLM…ILSL), 140–160 (LLSS…FYGL), 185–205 (ILLL…LWVP), 218–238 (WMGS…YPLL), 241–261 (LAPF…VLMA), 269–289 (FLAY…AIGD), 292–312 (AYGY…VLLS), 332–352 (LGLG…FAGF), 356–376 (LLVL…LLIL), 384–404 (YYLK…SAPI), and 408–428 (YPNL…LLLL).

Belongs to the complex I subunit 2 family.

It is found in the mitochondrion inner membrane. The catalysed reaction is a ubiquinone + NADH + 5 H(+)(in) = a ubiquinol + NAD(+) + 4 H(+)(out). Its function is as follows. Core subunit of the mitochondrial membrane respiratory chain NADH dehydrogenase (Complex I) that is believed to belong to the minimal assembly required for catalysis. Complex I functions in the transfer of electrons from NADH to the respiratory chain. The immediate electron acceptor for the enzyme is believed to be ubiquinone. This chain is NADH-ubiquinone oxidoreductase chain 2, found in Hyaloraphidium curvatum (Lower fungus).